Here is a 100-residue protein sequence, read N- to C-terminus: ESAT-6-like protein EsxB (100 aa).

The disordered stretch occupies residues 80–100; it reads GTQYTSTDEDQAGTLASSMNI.

The protein belongs to the WXG100 family. CFP-10 subfamily. In terms of assembly, forms a tight 1:1 complex with EsxA. An artificial EsxA-EsxB heterodimer interacts with EspA.

Its subcellular location is the secreted. In terms of biological role, an exported protein. Plays a role in DNA conjugation, in at least a donor strain. The polypeptide is ESAT-6-like protein EsxB (Mycolicibacterium smegmatis (strain ATCC 700084 / mc(2)155) (Mycobacterium smegmatis)).